The sequence spans 53 residues: uncharacterized protein (53 aa).

It is found in the plastid. The protein resides in the chloroplast. This is an uncharacterized protein from Guillardia theta (Cryptophyte).